The primary structure comprises 116 residues: Large ribosomal subunit protein uL18 (116 aa).

The protein belongs to the universal ribosomal protein uL18 family. Part of the 50S ribosomal subunit; part of the 5S rRNA/L5/L18/L25 subcomplex. Contacts the 5S and 23S rRNAs.

This is one of the proteins that bind and probably mediate the attachment of the 5S RNA into the large ribosomal subunit, where it forms part of the central protuberance. The protein is Large ribosomal subunit protein uL18 of Shewanella frigidimarina (strain NCIMB 400).